Consider the following 672-residue polypeptide: Prion-like-(Q/N-rich) domain-bearing protein 25 (672 aa).

The helical transmembrane segment at 26-46 (VPPPIMICLFFLLLQIFVISV) threads the bilayer.

The protein resides in the membrane. The chain is Prion-like-(Q/N-rich) domain-bearing protein 25 (pqn-25) from Caenorhabditis elegans.